We begin with the raw amino-acid sequence, 129 residues long: Small ribosomal subunit protein uS11 (129 aa).

This sequence belongs to the universal ribosomal protein uS11 family. As to quaternary structure, part of the 30S ribosomal subunit. Interacts with proteins S7 and S18. Binds to IF-3.

Located on the platform of the 30S subunit, it bridges several disparate RNA helices of the 16S rRNA. Forms part of the Shine-Dalgarno cleft in the 70S ribosome. This Idiomarina loihiensis (strain ATCC BAA-735 / DSM 15497 / L2-TR) protein is Small ribosomal subunit protein uS11.